The following is a 354-amino-acid chain: Uroporphyrinogen decarboxylase (354 aa).

Residues 27–31, Asp-77, Tyr-154, Thr-209, and His-327 each bind substrate; that span reads RQAGR.

Belongs to the uroporphyrinogen decarboxylase family. In terms of assembly, homodimer.

It localises to the cytoplasm. It catalyses the reaction uroporphyrinogen III + 4 H(+) = coproporphyrinogen III + 4 CO2. The protein operates within porphyrin-containing compound metabolism; protoporphyrin-IX biosynthesis; coproporphyrinogen-III from 5-aminolevulinate: step 4/4. In terms of biological role, catalyzes the decarboxylation of four acetate groups of uroporphyrinogen-III to yield coproporphyrinogen-III. This chain is Uroporphyrinogen decarboxylase, found in Salmonella newport (strain SL254).